The sequence spans 113 residues: Large ribosomal subunit protein uL24 (113 aa).

The protein belongs to the universal ribosomal protein uL24 family. As to quaternary structure, part of the 50S ribosomal subunit.

Functionally, one of two assembly initiator proteins, it binds directly to the 5'-end of the 23S rRNA, where it nucleates assembly of the 50S subunit. Its function is as follows. One of the proteins that surrounds the polypeptide exit tunnel on the outside of the subunit. This is Large ribosomal subunit protein uL24 from Chlamydia abortus (strain DSM 27085 / S26/3) (Chlamydophila abortus).